A 682-amino-acid polypeptide reads, in one-letter code: Elongation factor G (682 aa).

Positions 8–282 (QKFRNFGIMA…AVVDYLPSPV (275 aa)) constitute a tr-type G domain. Residues 17–24 (AHIDAGKT), 81–85 (DTPGH), and 135–138 (NKMD) each bind GTP.

Belongs to the TRAFAC class translation factor GTPase superfamily. Classic translation factor GTPase family. EF-G/EF-2 subfamily.

It is found in the cytoplasm. Catalyzes the GTP-dependent ribosomal translocation step during translation elongation. During this step, the ribosome changes from the pre-translocational (PRE) to the post-translocational (POST) state as the newly formed A-site-bound peptidyl-tRNA and P-site-bound deacylated tRNA move to the P and E sites, respectively. Catalyzes the coordinated movement of the two tRNA molecules, the mRNA and conformational changes in the ribosome. In Malacoplasma penetrans (strain HF-2) (Mycoplasma penetrans), this protein is Elongation factor G.